Reading from the N-terminus, the 417-residue chain is Gamma-glutamyl phosphate reductase (417 aa).

This sequence belongs to the gamma-glutamyl phosphate reductase family.

The protein resides in the cytoplasm. It carries out the reaction L-glutamate 5-semialdehyde + phosphate + NADP(+) = L-glutamyl 5-phosphate + NADPH + H(+). The protein operates within amino-acid biosynthesis; L-proline biosynthesis; L-glutamate 5-semialdehyde from L-glutamate: step 2/2. Functionally, catalyzes the NADPH-dependent reduction of L-glutamate 5-phosphate into L-glutamate 5-semialdehyde and phosphate. The product spontaneously undergoes cyclization to form 1-pyrroline-5-carboxylate. This is Gamma-glutamyl phosphate reductase from Haemophilus influenzae (strain PittEE).